Reading from the N-terminus, the 46-residue chain is Mu-segestritoxin-Sf1f (46 aa).

Disulfide bonds link cysteine 3–cysteine 19, cysteine 10–cysteine 22, cysteine 18–cysteine 42, and cysteine 24–cysteine 40. The keys region for toxin activity stretch occupies residues 31-33 (RPW).

Belongs to the neurotoxin 16 (SFI) family. As to expression, expressed by the venom gland.

It localises to the secreted. Insecticidal toxin. It inhibits insect voltage-gated sodium channels (Nav) by partially blocking the channel pore in DUM neurons from the American cockroach, not by acting as a gating modifier. The inhibition is only partially reversible after prolonged washout. In vivo, the toxin causes flaccid paralysis followed by death when injected into Heliothis virescens larvae. It also causes uncoordinated movements followed by full paralysis to sheep blowflies (Lucilia cuprina). When the toxin is fused to snowdrop lectin, it is orally active against larvae of the tomato moth (Laconobia oleracea), the rice brown planthopper (Nilaparvata lugens), and the peach-potato aphid (Myzus persicae). In Segestria florentina (Tube-web spider), this protein is Mu-segestritoxin-Sf1f.